The sequence spans 95 residues: Co-chaperonin GroES (95 aa).

Belongs to the GroES chaperonin family. Heptamer of 7 subunits arranged in a ring. Interacts with the chaperonin GroEL.

The protein resides in the cytoplasm. Together with the chaperonin GroEL, plays an essential role in assisting protein folding. The GroEL-GroES system forms a nano-cage that allows encapsulation of the non-native substrate proteins and provides a physical environment optimized to promote and accelerate protein folding. GroES binds to the apical surface of the GroEL ring, thereby capping the opening of the GroEL channel. In Cereibacter sphaeroides (strain ATCC 17025 / ATH 2.4.3) (Rhodobacter sphaeroides), this protein is Co-chaperonin GroES.